Here is a 392-residue protein sequence, read N- to C-terminus: Immunoglobulin-binding protein EibA (392 aa).

Residues 1–27 (MSKKFTKAVLSAAMAGVLFGVSFDIMA) form the signal peptide. The interval 28-301 (AEQSYSALNA…IAANTRTLQQ (274 aa)) is surface exposed passenger domain. The Extracellular portion of the chain corresponds to 28-341 (AEQSYSALNA…GLFQPYSVGK (314 aa)). Residues 174 to 215 (ESANSTIVANELEAQKGKLDAQKGELEAQKKNLGELTTRTDK) adopt a coiled-coil conformation. Residues 187-230 (AQKGKLDAQKGELEAQKKNLGELTTRTDKIDAAAAATAAKVESR) are right-handed coiled-coil (RHcc). A saddle domain region spans residues 231-256 (TLVGVSSDGTLTRAEGAKNTISVNDG). The interval 257–322 (LVALSGRTDR…INENHKEMKR (66 aa)) is left-handed coiled-coil (LHcc). The segment at 299–341 (LQQHSARLDSQQRQINENHKEMKRAAAQSAALTGLFQPYSVGK) is outer membrane translocation of the passenger domain. Beta stranded transmembrane passes span 342–352 (FNASAAVGGYS), 355–366 (QALAVGVGYRFN), 369–378 (TAAKAGVAFS), and 382–392 (ASWNVGVNFEF). The tract at residues 342 to 392 (FNASAAVGGYSDEQALAVGVGYRFNEQTAAKAGVAFSDGDASWNVGVNFEF) is translocator domain.

Belongs to the autotransporter-2 (AT-2) (TC 1.B.40) family. Eib subfamily. In terms of assembly, homotrimer; can probably form mixed heterotrimers in vivo. Will form mixed heterotrimers with EibD; these are correctly located in the outer membrane and bind IgG Fc, although less well than homotrimers. Does not form trimers with distantly related YadA from Y.enterocolitica; coexpression was lethal and one of the genes is eliminated in vivo. If the full translocator domain (299-392) is exchanged with that of YadA ('368-455'), will form heterotrimers with YadA and vice-versa. In denaturing gels runs as 2 bands of about 121 and 131 kDa; extracting the sample with 88% phenol at 70 degrees Celsius reduces part of the signal to about 45 kDa. Binds the Fc portion of IgG; binds more than 1 Fc per subunit.

It localises to the cell surface. The protein resides in the cell outer membrane. In terms of biological role, binds (in a non-immune fashion) to the Fc portion of human IgG but not IgA; binding occurs on the cell surface. Confers the ability to survive exposure to human serum exposure. Binds to the Fc portion of human IgG and to whole mouse antibodies also via Fc, binds more than 1 Fc or IgG. This chain is Immunoglobulin-binding protein EibA, found in Escherichia coli.